A 651-amino-acid chain; its full sequence is Far upstream element-binding protein 1 (651 aa).

Disordered stretches follow at residues 1-24 and 40-92; these read MADY…GVVN and KIGG…HQQQ. Alanine 2 is subject to N-acetylalanine. Serine 48 and serine 51 each carry phosphoserine. The segment covering 61-73 has biased composition (basic and acidic residues); sequence RPLEDGDQPDAKK. 3 KH domains span residues 96 to 160, 181 to 247, and 271 to 335; these read VMTE…KRLL, NAVQ…KEMV, and NEGI…AEII. At serine 136 the chain carries Phosphoserine. Threonine 149 is modified (phosphothreonine). Omega-N-methylarginine is present on residues arginine 317, arginine 355, arginine 357, and arginine 359. Residues 372–439 form the KH 4 domain; sequence LQEFNFIVPT…QQIDYARQLI (68 aa). Serine 411 is modified (phosphoserine). The residue at position 428 (threonine 428) is a Phosphothreonine. Disordered stretches follow at residues 443–528, 545–574, and 625–651; these read IGGP…GADP, AQPP…APAG, and TSPQ…HHLY. The span at 464–501 shows a compositional bias: pro residues; that stretch reads PHGPPGPPGPGTPMGPYNPAPYNPGPPGPAPHGPPAPY. Composition is skewed to low complexity over residues 514–528 and 552–574; these read QQQA…GADP and PAGA…APAG. Phosphoserine is present on serine 626.

As to quaternary structure, found in a complex with PUF60 and far upstream element (FUSE) DNA segment. Interacts with PUF60 and JTV1. Post-translationally, ubiquitinated. This targets the protein for proteasome-mediated degradation.

It localises to the nucleus. Regulates MYC expression by binding to a single-stranded far-upstream element (FUSE) upstream of the MYC promoter. May act both as activator and repressor of transcription. In Mus musculus (Mouse), this protein is Far upstream element-binding protein 1 (Fubp1).